The primary structure comprises 1054 residues: Putative disease resistance RPP13-like protein 1 (1054 aa).

Leucine-zipper stretches follow at residues 9–20 (LAAFLQALFQTL) and 39–53 (LERLSTALLTITAVL). The stretch at 117 to 147 (DFLDGNSEHLETRLEKVTIRLERLASQRNIL) forms a coiled coil. The NB-ARC domain maps to 152 to 462 (LTAMIPKQRL…AEGFLQQTRS (311 aa)). 203-210 (GIGGVGKT) contacts ATP. LRR repeat units follow at residues 579–600 (RLRVLSLSHYKIARLPPDFFKN), 603–624 (HARFLDLSRTELEKLPKSLCYM), 626–648 (NLQTLLLSYCSSLKELPTDISNL), 650–672 (NLRYLDLIGTKLRQMPRRFGRLK), and 676–697 (TLTTFFVSASDGSRISELGGLH). Positions 1018–1054 (PQYHHPQFHLPRSNVSGSPKSHGSHRSYDSRSSSRYD) are disordered. Positions 1043–1054 (RSYDSRSSSRYD) are enriched in basic and acidic residues.

It belongs to the disease resistance NB-LRR family. RPP13 subfamily.

Functionally, potential disease resistance protein. The sequence is that of Putative disease resistance RPP13-like protein 1 (RPPL1) from Arabidopsis thaliana (Mouse-ear cress).